The following is a 281-amino-acid chain: Pantothenate synthetase (281 aa).

30 to 37 (MGNLHQGH) lines the ATP pocket. Histidine 37 serves as the catalytic Proton donor. A (R)-pantoate-binding site is contributed by glutamine 61. Glutamine 61 contributes to the beta-alanine binding site. 149 to 152 (GNKD) contributes to the ATP binding site. A (R)-pantoate-binding site is contributed by glutamine 155. ATP contacts are provided by residues isoleucine 178 and 186–189 (MSSR).

Belongs to the pantothenate synthetase family. Homodimer.

It is found in the cytoplasm. It catalyses the reaction (R)-pantoate + beta-alanine + ATP = (R)-pantothenate + AMP + diphosphate + H(+). It participates in cofactor biosynthesis; (R)-pantothenate biosynthesis; (R)-pantothenate from (R)-pantoate and beta-alanine: step 1/1. Its function is as follows. Catalyzes the condensation of pantoate with beta-alanine in an ATP-dependent reaction via a pantoyl-adenylate intermediate. This chain is Pantothenate synthetase, found in Shewanella baltica (strain OS195).